The sequence spans 359 residues: DNA integrity scanning protein DisA (359 aa).

Residues 7–145 form the DAC domain; the sequence is DDIFRATLAA…AGRRYVLDGA (139 aa). ATP-binding positions include Gly74, Leu92, and 105-109; that span reads TRHRT.

This sequence belongs to the DisA family. As to quaternary structure, homooctamer. Mg(2+) is required as a cofactor.

It carries out the reaction 2 ATP = 3',3'-c-di-AMP + 2 diphosphate. In terms of biological role, participates in a DNA-damage check-point that is active prior to asymmetric division when DNA is damaged. DisA forms globular foci that rapidly scan along the chromosomes during sporulation, searching for lesions. When a lesion is present, DisA pauses at the lesion site. This triggers a cellular response that culminates in a temporary block in sporulation initiation. Also has diadenylate cyclase activity, catalyzing the condensation of 2 ATP molecules into cyclic di-AMP (c-di-AMP). c-di-AMP acts as a signaling molecule that couples DNA integrity with progression of sporulation. The rise in c-di-AMP level generated by DisA while scanning the chromosome, operates as a positive signal that advances sporulation; upon encountering a lesion, the DisA focus arrests at the damaged site and halts c-di-AMP synthesis. This is DNA integrity scanning protein DisA from Parafrankia sp. (strain EAN1pec).